A 237-amino-acid chain; its full sequence is Uridylate kinase (237 aa).

ATP is bound at residue 9-12 (KLSG). Gly51 contributes to the UMP binding site. Gly52 and Arg56 together coordinate ATP. Residues Asp71 and 132–139 (CGNPFFTT) contribute to the UMP site. Thr159, Tyr165, and Asp168 together coordinate ATP.

The protein belongs to the UMP kinase family. Homohexamer.

The protein localises to the cytoplasm. It catalyses the reaction UMP + ATP = UDP + ADP. It participates in pyrimidine metabolism; CTP biosynthesis via de novo pathway; UDP from UMP (UMPK route): step 1/1. Its activity is regulated as follows. Inhibited by UTP. Functionally, catalyzes the reversible phosphorylation of UMP to UDP. This chain is Uridylate kinase, found in Prochlorococcus marinus (strain NATL1A).